Reading from the N-terminus, the 640-residue chain is Guanylate-binding protein 4 (640 aa).

Positions 1 to 325 are GTPase domain (Globular); sequence MGERTLHAAV…DAINSGAVPC (325 aa). The GB1/RHD3-type G domain occupies 50 to 292; the sequence is SQPVVVVAIV…FCSYIFTHAK (243 aa). Residues 60–67, 82–84, and 112–116 each bind GTP; these read GLYRTGKS, LGS, and DTEGL. Residues 499–612 are a coiled coil; that stretch reads GEKAIAAERA…EQLRLLKILD (114 aa).

Belongs to the TRAFAC class dynamin-like GTPase superfamily. GB1/RHD3 GTPase family. GB1 subfamily. Heterodimer with other family members, including GBP1, GBP2 and GBP5. Dimerization regulates subcellular location. Interacts with IRF7; preventing interaction between TRAF6 and IRF7, resulting in impaired TRAF6-mediated IRF7 ubiquitination. In terms of processing, (Microbial infection) Ubiquitinated by S.flexneri IpaH9.8, leading to its degradation by the proteasome, thereby preventing its ability to promote host defense against bacterial infection.

The protein localises to the golgi apparatus membrane. Its subcellular location is the cytoplasm. It localises to the nucleus. The protein resides in the perinuclear region. It catalyses the reaction GTP + H2O = GDP + phosphate + H(+). Functionally, interferon (IFN)-inducible GTPase that plays important roles in innate immunity against a diverse range of bacterial, viral and protozoan pathogens. Negatively regulates the antiviral response by inhibiting activation of IRF7 transcription factor. This chain is Guanylate-binding protein 4, found in Homo sapiens (Human).